We begin with the raw amino-acid sequence, 450 residues long: Tubulin beta-1 chain (450 aa).

GTP is bound by residues Gln11, Glu69, Ser138, Gly142, Thr143, Gly144, Asn204, and Asn226. Glu69 lines the Mg(2+) pocket. The segment at 426-450 is disordered; the sequence is QDATADEDEYGEEEGDEEEYGQHDI. Over residues 429–444 the composition is skewed to acidic residues; the sequence is TADEDEYGEEEGDEEE.

It belongs to the tubulin family. As to quaternary structure, dimer of alpha and beta chains. A typical microtubule is a hollow water-filled tube with an outer diameter of 25 nm and an inner diameter of 15 nM. Alpha-beta heterodimers associate head-to-tail to form protofilaments running lengthwise along the microtubule wall with the beta-tubulin subunit facing the microtubule plus end conferring a structural polarity. Microtubules usually have 13 protofilaments but different protofilament numbers can be found in some organisms and specialized cells. Requires Mg(2+) as cofactor.

Its subcellular location is the cytoplasm. The protein resides in the cytoskeleton. Its function is as follows. Tubulin is the major constituent of microtubules, a cylinder consisting of laterally associated linear protofilaments composed of alpha- and beta-tubulin heterodimers. Microtubules grow by the addition of GTP-tubulin dimers to the microtubule end, where a stabilizing cap forms. Below the cap, tubulin dimers are in GDP-bound state, owing to GTPase activity of alpha-tubulin. The chain is Tubulin beta-1 chain (TUBB1) from Pisum sativum (Garden pea).